Consider the following 342-residue polypeptide: N-acetyl-gamma-glutamyl-phosphate reductase (342 aa).

Residue C149 is part of the active site.

The protein belongs to the NAGSA dehydrogenase family. Type 1 subfamily.

Its subcellular location is the cytoplasm. It carries out the reaction N-acetyl-L-glutamate 5-semialdehyde + phosphate + NADP(+) = N-acetyl-L-glutamyl 5-phosphate + NADPH + H(+). It functions in the pathway amino-acid biosynthesis; L-arginine biosynthesis; N(2)-acetyl-L-ornithine from L-glutamate: step 3/4. Catalyzes the NADPH-dependent reduction of N-acetyl-5-glutamyl phosphate to yield N-acetyl-L-glutamate 5-semialdehyde. In Jannaschia sp. (strain CCS1), this protein is N-acetyl-gamma-glutamyl-phosphate reductase.